Here is a 928-residue protein sequence, read N- to C-terminus: Dual serine/threonine and tyrosine protein kinase (928 aa).

The segment covering 1-14 has biased composition (low complexity); it reads MEGDGVPWGSEPES. 2 disordered regions span residues 1-22 and 55-81; these read MEGD…GGGG and LRGS…AGDV. The stretch at 394–430 forms a coiled coil; the sequence is RKKENELYESLMNIANRKQEEMKDMIVETLNTMKEEL. In terms of domain architecture, Protein kinase spans 651 to 905; that stretch reads PKLGQELGRG…PLLGIVQPML (255 aa). ATP is bound by residues 657–665 and K680; that span reads LGRGQYGVV. Catalysis depends on D776, which acts as the Proton acceptor.

The protein belongs to the protein kinase superfamily. Ser/Thr protein kinase family.

The protein resides in the cytoplasm. It is found in the cell membrane. It localises to the apical cell membrane. Its subcellular location is the basolateral cell membrane. The protein localises to the cell junction. The catalysed reaction is L-seryl-[protein] + ATP = O-phospho-L-seryl-[protein] + ADP + H(+). The enzyme catalyses L-threonyl-[protein] + ATP = O-phospho-L-threonyl-[protein] + ADP + H(+). It catalyses the reaction L-tyrosyl-[protein] + ATP = O-phospho-L-tyrosyl-[protein] + ADP + H(+). Functionally, acts as a positive regulator of ERK phosphorylation downstream of fibroblast growth factor-receptor activation. Involved in the regulation of both caspase-dependent apoptosis and caspase-independent cell death. In the skin, it plays a predominant role in suppressing caspase-dependent apoptosis in response to UV stress in a range of dermal cell types. The sequence is that of Dual serine/threonine and tyrosine protein kinase (DSTYK) from Bos taurus (Bovine).